The following is a 375-amino-acid chain: AT-rich binding protein (375 aa).

Residues Ile-29–His-52 form a C2H2-type 1 zinc finger. Residues Asp-110–Glu-119 are compositionally biased toward basic and acidic residues. A disordered region spans residues Asp-110–Gln-142. The segment covering Gln-121–Gln-142 has biased composition (low complexity). 2 consecutive C2H2-type zinc fingers follow at residues Tyr-308–His-332 and Phe-338–His-361.

Its subcellular location is the nucleus. May be a transcription factor for genes having (A+T) stretches in their promoter and/or enhancer regions. Binds to AT rich DNA. The chain is AT-rich binding protein from Drosophila pseudoobscura pseudoobscura (Fruit fly).